The sequence spans 195 residues: Probable GTP-binding protein EngB (195 aa).

Residues 24 to 195 enclose the EngB-type G domain; that stretch reads GLSEVALSGR…QIWDLIANYL (172 aa). GTP contacts are provided by residues 32 to 39, 59 to 63, 77 to 80, 144 to 147, and 176 to 178; these read GRSNVGKS, GKTQT, DVPG, TKED, and YSS. Mg(2+) contacts are provided by Ser39 and Thr61.

It belongs to the TRAFAC class TrmE-Era-EngA-EngB-Septin-like GTPase superfamily. EngB GTPase family. Mg(2+) serves as cofactor.

Necessary for normal cell division and for the maintenance of normal septation. In Staphylococcus haemolyticus (strain JCSC1435), this protein is Probable GTP-binding protein EngB.